A 490-amino-acid polypeptide reads, in one-letter code: Cytochrome P450 71A19 (490 aa).

The chain crosses the membrane as a helical span at residues 3–23 (IILVTLCLTTLLALLLLKSIL). Cys-433 contributes to the heme binding site.

Belongs to the cytochrome P450 family. Heme is required as a cofactor.

It localises to the membrane. The protein is Cytochrome P450 71A19 (CYP71A19) of Arabidopsis thaliana (Mouse-ear cress).